Reading from the N-terminus, the 73-residue chain is DNA-binding protein S1FA3 (73 aa).

A Nuclear localization signal motif is present at residues 47–52; the sequence is PPRKKK. The segment covering 47–63 has biased composition (basic residues); it reads PPRKKKPVSKKKMKKEK. The segment at 47 to 73 is disordered; that stretch reads PPRKKKPVSKKKMKKEKMKQGVQVPGE.

Belongs to the S1FA transcription factor family.

The protein resides in the nucleus. In terms of biological role, DNA-binding protein that specifically recognizes a negative element (S1F) within the RPS1 promoter. This chain is DNA-binding protein S1FA3 (S1FA3), found in Arabidopsis thaliana (Mouse-ear cress).